A 134-amino-acid chain; its full sequence is Calcitonin gene-related peptide 2 (134 aa).

The N-terminal stretch at 1 to 26 (MDFWKFFPFLALSSMWVLCLASSLQA) is a signal peptide. A propeptide spanning residues 27-86 (APFRSALESSLDLGTLSDQEKHLLLAALIQDYEQKARKLEQEEQETEGSRKGSSSSVISQ) is cleaved from the precursor. The tract at residues 65–91 (LEQEEQETEGSRKGSSSSVISQKRSCN) is disordered. Positions 77 to 89 (KGSSSSVISQKRS) are enriched in low complexity. C90 and C95 are oxidised to a cystine. F125 is modified (phenylalanine amide). A propeptide spanning residues 131 to 134 (DLRV) is cleaved from the precursor.

This sequence belongs to the calcitonin family.

It is found in the secreted. Its function is as follows. CALCB/CGRP2 is a peptide hormone that induces vasodilation mediated by the CALCRL-RAMP1 receptor complex. Dilates a variety of vessels including the coronary, cerebral and systemic vasculature. Its abundance in the CNS also points toward a neurotransmitter or neuromodulator role. The polypeptide is Calcitonin gene-related peptide 2 (Rattus norvegicus (Rat)).